Here is a 494-residue protein sequence, read N- to C-terminus: Ubiquitin carboxyl-terminal hydrolase 27 (494 aa).

The chain crosses the membrane as a helical span at residues 30–50 (LSFAGLLGVAGFVFAQQHGLF). Residues 74–494 (PGLQNLGNNC…EASLLFYERL (421 aa)) enclose the USP domain. Cys83 (nucleophile) is an active-site residue. Residue His440 is the Proton acceptor of the active site.

The protein belongs to the peptidase C19 family.

It localises to the membrane. It carries out the reaction Thiol-dependent hydrolysis of ester, thioester, amide, peptide and isopeptide bonds formed by the C-terminal Gly of ubiquitin (a 76-residue protein attached to proteins as an intracellular targeting signal).. In terms of biological role, recognizes and hydrolyzes the peptide bond at the C-terminal Gly of ubiquitin. Involved in the processing of poly-ubiquitin precursors as well as that of ubiquitinated proteins. This is Ubiquitin carboxyl-terminal hydrolase 27 (UBP27) from Arabidopsis thaliana (Mouse-ear cress).